A 243-amino-acid polypeptide reads, in one-letter code: uncharacterized protein (243 aa).

Its subcellular location is the nucleus. The protein resides in the nucleolus. This is an uncharacterized protein from Schizosaccharomyces pombe (strain 972 / ATCC 24843) (Fission yeast).